Reading from the N-terminus, the 165-residue chain is Putative defense protein Hdd11 (165 aa).

Positions 1–17 are cleaved as a signal peptide; sequence MWATYVFIAVSLACANG. The Reelin domain maps to 18 to 165; that stretch reads YSSGAPESVC…VESGPVKVIS (148 aa). Residues Cys27 and Cys104 are joined by a disulfide bond.

Belongs to the insect defense protein family.

The protein resides in the secreted. As this protein is expressed upon bacterial infection, it may have antimicrobial activity. This chain is Putative defense protein Hdd11, found in Hyphantria cunea (Fall webworm moth).